The sequence spans 546 residues: Delta-1-pyrroline-5-carboxylate dehydrogenase (546 aa).

An NAD(+)-binding site is contributed by 279–284; it reads KDISSN. The active-site Proton acceptor is E297. Residue C331 is the Nucleophile of the active site.

This sequence belongs to the aldehyde dehydrogenase family.

The protein localises to the cytoplasm. The catalysed reaction is L-glutamate 5-semialdehyde + NAD(+) + H2O = L-glutamate + NADH + 2 H(+). It functions in the pathway amino-acid degradation; L-proline degradation into L-glutamate; L-glutamate from L-proline: step 2/2. The chain is Delta-1-pyrroline-5-carboxylate dehydrogenase (pruA) from Agaricus bisporus (White button mushroom).